Consider the following 91-residue polypeptide: Progonadoliberin-1 (91 aa).

A signal peptide spans 1–23; that stretch reads MEPIPKLLAGLLLLTLCVVGCSS. Glutamine 24 carries the pyrrolidone carboxylic acid modification. The residue at position 33 (glycine 33) is a Glycine amide.

Belongs to the GnRH family. Post-translationally, the precursor is cleaved by ACE, which removes the Gly-Lys-Arg peptide at the C-terminus, leading to mature hormone. The mature form of Gonadoliberin-1 is also cleaved and degraded by ACE.

It is found in the secreted. Functionally, stimulates the secretion of gonadotropins; it stimulates the secretion of both luteinizing and follicle-stimulating hormones. The protein is Progonadoliberin-1 (GNRH1) of Sus scrofa (Pig).